Here is a 201-residue protein sequence, read N- to C-terminus: Large ribosomal subunit protein bL25 (201 aa).

The protein belongs to the bacterial ribosomal protein bL25 family. CTC subfamily. In terms of assembly, part of the 50S ribosomal subunit; part of the 5S rRNA/L5/L18/L25 subcomplex. Contacts the 5S rRNA. Binds to the 5S rRNA independently of L5 and L18.

In terms of biological role, this is one of the proteins that binds to the 5S RNA in the ribosome where it forms part of the central protuberance. The polypeptide is Large ribosomal subunit protein bL25 (Akkermansia muciniphila (strain ATCC BAA-835 / DSM 22959 / JCM 33894 / BCRC 81048 / CCUG 64013 / CIP 107961 / Muc)).